The primary structure comprises 289 residues: Syntaxin-3 (289 aa).

Residues 1–263 (MKDRLEQLKA…VKYQSQARKK (263 aa)) lie on the Cytoplasmic side of the membrane. The stretch at 32–111 (MDEFFSEIEE…IEEDEVRSSA (80 aa)) forms a coiled coil. In terms of domain architecture, t-SNARE coiled-coil homology spans 191-253 (LSEIEGRHKD…EKARDETKKA (63 aa)). The chain crosses the membrane as a helical; Anchor for type IV membrane protein span at residues 264–284 (LIIIIVLVVVLLGILALIIGL). The Extracellular segment spans residues 285 to 289 (SVGLN).

It belongs to the syntaxin family. As to quaternary structure, interacts with REEP6. Interacts with PRPH2 in rod and cone photoreceptors. Interacts with ROM1. Interacts with SNAP25. Interacts with VAMP2. In terms of assembly, interacts with IPO5. In terms of tissue distribution, expressed in small intestine, kidney, pancreas, placenta as well as in retina. Weaker expression in lung, liver and heart. Not expressed in brain and skeletal muscle. Expressed only in the retina. As to expression, ubiquitously expressed.

Its subcellular location is the apical cell membrane. The protein resides in the nucleus. In terms of biological role, potentially involved in docking of synaptic vesicles at presynaptic active zones. Apical receptor involved in membrane fusion of apical vesicles. Essential for survival of retinal photoreceetors. Its function is as follows. Functions as a regulator of gene expression. The sequence is that of Syntaxin-3 (STX3) from Homo sapiens (Human).